A 447-amino-acid chain; its full sequence is Glutamate--tRNA ligase 1 (447 aa).

The 'HIGH' region motif lies at 10 to 20 (PSPTGMLHVGN). The short motif at 240-244 (KISKR) is the 'KMSKS' region element. ATP is bound at residue lysine 243.

The protein belongs to the class-I aminoacyl-tRNA synthetase family. Glutamate--tRNA ligase type 1 subfamily. In terms of assembly, monomer.

It localises to the cytoplasm. It catalyses the reaction tRNA(Glu) + L-glutamate + ATP = L-glutamyl-tRNA(Glu) + AMP + diphosphate. Its function is as follows. Catalyzes the attachment of glutamate to tRNA(Glu) in a two-step reaction: glutamate is first activated by ATP to form Glu-AMP and then transferred to the acceptor end of tRNA(Glu). The polypeptide is Glutamate--tRNA ligase 1 (Rickettsia conorii (strain ATCC VR-613 / Malish 7)).